A 346-amino-acid polypeptide reads, in one-letter code: Eukaryotic translation initiation factor 3 subunit I (346 aa).

WD repeat units follow at residues Gly-8–His-49, Gly-50–Asp-91, Cys-145–Asn-184, Glu-189–Thr-228, and Gly-286–Met-325.

This sequence belongs to the eIF-3 subunit I family. Component of the eukaryotic translation initiation factor 3 (eIF-3) complex.

It is found in the cytoplasm. Component of the eukaryotic translation initiation factor 3 (eIF-3) complex, which is involved in protein synthesis of a specialized repertoire of mRNAs and, together with other initiation factors, stimulates binding of mRNA and methionyl-tRNAi to the 40S ribosome. The eIF-3 complex specifically targets and initiates translation of a subset of mRNAs involved in cell proliferation. The chain is Eukaryotic translation initiation factor 3 subunit I (tif-34) from Neurospora crassa (strain ATCC 24698 / 74-OR23-1A / CBS 708.71 / DSM 1257 / FGSC 987).